The sequence spans 1473 residues: Ovostatin (1473 aa).

The N-terminal stretch at 1-36 (MHCFLGREILSFFCLTVRKMWLKFILAILLLHAAAG) is a signal peptide. Residues N67, N82, N89, N191, N342, N403, N527, N588, N757, N1141, N1221, N1315, and N1347 are each glycosylated (N-linked (GlcNAc...) asparagine).

The protein belongs to the protease inhibitor I39 (alpha-2-macroglobulin) family. In terms of assembly, homotetramer, which consists of two pairs of disulfide-linked chains. In terms of processing, lacks the thioester bond found in other members of this family. Glycosylated; contains 56 glucosamine units per subunit.

It localises to the secreted. In terms of biological role, is able to inhibit all four classes of proteinases by a unique 'trapping' mechanism. This protein has a peptide stretch, called the 'bait region' which contains specific cleavage sites for different proteinases. When a proteinase cleaves the bait region, a conformational change is induced in the protein which traps the proteinase. The entrapped enzyme remains active against low molecular weight substrates (activity against high molecular weight substrates is greatly reduced). The polypeptide is Ovostatin (Gallus gallus (Chicken)).